We begin with the raw amino-acid sequence, 303 residues long: N-acetyl-D-glucosamine kinase (303 aa).

Residues 4-11 and 133-140 contribute to the ATP site; these read GFDIGGTK and GVGGGLVL. The Zn(2+) site is built by H157, C177, C179, and C184.

Belongs to the ROK (NagC/XylR) family. NagK subfamily.

It catalyses the reaction N-acetyl-D-glucosamine + ATP = N-acetyl-D-glucosamine 6-phosphate + ADP + H(+). The protein operates within cell wall biogenesis; peptidoglycan recycling. Catalyzes the phosphorylation of N-acetyl-D-glucosamine (GlcNAc) derived from cell-wall degradation, yielding GlcNAc-6-P. The chain is N-acetyl-D-glucosamine kinase from Salmonella heidelberg (strain SL476).